Consider the following 900-residue polypeptide: Bifunctional uridylyltransferase/uridylyl-removing enzyme (900 aa).

A uridylyltransferase region spans residues 1–342; sequence MPQVDPELFD…WEGESGPIVP (342 aa). The segment at 343–705 is uridylyl-removing; that stretch reads LNSRFQVRDG…TTQREFEGGT (363 aa). Positions 461–583 constitute an HD domain; that stretch reads VDAHTLNVIK…VGDETHLDYL (123 aa). 2 ACT domains span residues 706–789 and 816–896; these read QIFI…IIQR and ILEI…PSPS.

It belongs to the GlnD family. It depends on Mg(2+) as a cofactor.

The enzyme catalyses [protein-PII]-L-tyrosine + UTP = [protein-PII]-uridylyl-L-tyrosine + diphosphate. It carries out the reaction [protein-PII]-uridylyl-L-tyrosine + H2O = [protein-PII]-L-tyrosine + UMP + H(+). Uridylyltransferase (UTase) activity is inhibited by glutamine, while glutamine activates uridylyl-removing (UR) activity. Functionally, modifies, by uridylylation and deuridylylation, the PII regulatory proteins (GlnB and homologs), in response to the nitrogen status of the cell that GlnD senses through the glutamine level. Under low glutamine levels, catalyzes the conversion of the PII proteins and UTP to PII-UMP and PPi, while under higher glutamine levels, GlnD hydrolyzes PII-UMP to PII and UMP (deuridylylation). Thus, controls uridylylation state and activity of the PII proteins, and plays an important role in the regulation of nitrogen fixation and metabolism. The polypeptide is Bifunctional uridylyltransferase/uridylyl-removing enzyme (Stutzerimonas stutzeri (strain A1501) (Pseudomonas stutzeri)).